The following is a 545-amino-acid chain: E3 ubiquitin-protein ligase ipaH9.8 (545 aa).

The interval 1 to 242 (MLPINNNFSL…YHGPRIYFSM (242 aa)) is interaction with target proteins. LRR repeat units lie at residues 57–77 (NSDE…NLPA), 78–99 (QITL…PVTL), 100–117 (KKLY…VLPP), 118–139 (ALES…PDSL), 140–157 (LTMN…SLPQ), 158–179 (ALKN…SEGN), 182–203 (VVRE…ILNL), and 205–228 (NECS…QRLT). Residues 243 to 250 (SDGQQNTL) form a linker region. The segment at 251 to 545 (HRPLADAVTA…SENGSQLHHS (295 aa)) is E3 ubiquitin-protein ligase catalytic domain. The region spanning 253 to 545 (PLADAVTAWF…SENGSQLHHS (293 aa)) is the NEL domain. Residue cysteine 337 is the Glycyl thioester intermediate of the active site.

The protein belongs to the LRR-containing bacterial E3 ligase family. As to quaternary structure, also interacts with human and mouse U2AF1 (U2AF35). Ubiquitinated in the presence of host E1 ubiquitin-activating enzyme, E2 ubiquitin-conjugating enzyme and ubiquitin.

It is found in the secreted. The protein resides in the host cytoplasm. The protein localises to the host nucleus. The enzyme catalyses S-ubiquitinyl-[E2 ubiquitin-conjugating enzyme]-L-cysteine + [acceptor protein]-L-lysine = [E2 ubiquitin-conjugating enzyme]-L-cysteine + N(6)-ubiquitinyl-[acceptor protein]-L-lysine.. Exists in an autoinhibited state in the absence of substrate protein, due to interactions of the leucine-rich repeats with NEL domain. Is activated upon binding to a substrate protein. Functionally, effector E3 ubiquitin ligase that interferes with host's ubiquitination pathway and modulates the acute inflammatory responses, thus facilitating bacterial colonization within the host cell. Interacts with IKBKG (NEMO) and TNIP1 (ABIN-1), a ubiquitin-binding adapter protein, which results in TNIP1-dependent 'Lys-27'-linked polyubiquitination of IKBKG. Consequently, polyubiquitinated IKBKG undergoes proteasome-dependent degradation, which perturbs NF-kappa-B activation during bacterial infection. Mediates polyubiquitination of host U2AF1, leading to its proteasomal degradation. Catalyzes 'Lys-48'-linked polyubiquitination and subsequent degradation of a subset of host guanylate-binding proteins (GBP1, GBP2, GBP4 and GBP6), thereby suppressing host cell defense. In contrast, host GBP3 and GBP7 are not ubiquitinated by IpaH9.8. Uses UBE2D2 (UBCH5B) as an E2 ubiquitin-conjugating enzyme. The protein is E3 ubiquitin-protein ligase ipaH9.8 (ipaH9.8) of Shigella flexneri serotype X (strain 2002017).